The chain runs to 328 residues: Beta-ketoacyl-[acyl-carrier-protein] synthase III (328 aa).

Residues Cys113 and His252 contribute to the active site. Positions 253 to 257 (QANLR) are ACP-binding. Residue Asn282 is part of the active site.

The protein belongs to the thiolase-like superfamily. FabH family. As to quaternary structure, homodimer.

It is found in the cytoplasm. It carries out the reaction malonyl-[ACP] + acetyl-CoA + H(+) = 3-oxobutanoyl-[ACP] + CO2 + CoA. Its pathway is lipid metabolism; fatty acid biosynthesis. Its function is as follows. Catalyzes the condensation reaction of fatty acid synthesis by the addition to an acyl acceptor of two carbons from malonyl-ACP. Catalyzes the first condensation reaction which initiates fatty acid synthesis and may therefore play a role in governing the total rate of fatty acid production. Possesses both acetoacetyl-ACP synthase and acetyl transacylase activities. Its substrate specificity determines the biosynthesis of branched-chain and/or straight-chain of fatty acids. This is Beta-ketoacyl-[acyl-carrier-protein] synthase III from Campylobacter fetus subsp. fetus (strain 82-40).